Reading from the N-terminus, the 430-residue chain is Glutamate-1-semialdehyde 2,1-aminomutase (430 aa).

Lys-270 is modified (N6-(pyridoxal phosphate)lysine).

The protein belongs to the class-III pyridoxal-phosphate-dependent aminotransferase family. HemL subfamily. In terms of assembly, homodimer. Pyridoxal 5'-phosphate is required as a cofactor.

Its subcellular location is the cytoplasm. It carries out the reaction (S)-4-amino-5-oxopentanoate = 5-aminolevulinate. It functions in the pathway porphyrin-containing compound metabolism; protoporphyrin-IX biosynthesis; 5-aminolevulinate from L-glutamyl-tRNA(Glu): step 2/2. In Cupriavidus metallidurans (strain ATCC 43123 / DSM 2839 / NBRC 102507 / CH34) (Ralstonia metallidurans), this protein is Glutamate-1-semialdehyde 2,1-aminomutase.